Here is a 437-residue protein sequence, read N- to C-terminus: Chaperone SurA (437 aa).

A signal peptide spans 1–22 (MKNWKFPLISTLLLLLTINVHA). 2 consecutive PpiC domains span residues 173 to 274 (TVQY…KIDD) and 283 to 383 (VTEV…EVLE).

It is found in the periplasm. The enzyme catalyses [protein]-peptidylproline (omega=180) = [protein]-peptidylproline (omega=0). Its function is as follows. Chaperone involved in the correct folding and assembly of outer membrane proteins. Recognizes specific patterns of aromatic residues and the orientation of their side chains, which are found more frequently in integral outer membrane proteins. May act in both early periplasmic and late outer membrane-associated steps of protein maturation. This Aliivibrio fischeri (strain ATCC 700601 / ES114) (Vibrio fischeri) protein is Chaperone SurA.